The chain runs to 394 residues: Elongation factor Tu (394 aa).

The 195-residue stretch at 10 to 204 (KPHVNIGTIG…AVDSWIPLPE (195 aa)) folds into the tr-type G domain. Residues 19-26 (GHVDHGKT) form a G1 region. 19–26 (GHVDHGKT) contributes to the GTP binding site. Threonine 26 serves as a coordination point for Mg(2+). The segment at 60-64 (GITIN) is G2. A G3 region spans residues 81–84 (DCPG). GTP is bound by residues 81–85 (DCPGH) and 136–139 (NKCD). Residues 136–139 (NKCD) are G4. The tract at residues 174–176 (SGL) is G5.

This sequence belongs to the TRAFAC class translation factor GTPase superfamily. Classic translation factor GTPase family. EF-Tu/EF-1A subfamily. As to quaternary structure, monomer.

It localises to the cytoplasm. It carries out the reaction GTP + H2O = GDP + phosphate + H(+). Its function is as follows. GTP hydrolase that promotes the GTP-dependent binding of aminoacyl-tRNA to the A-site of ribosomes during protein biosynthesis. The sequence is that of Elongation factor Tu from Ureaplasma parvum serovar 3 (strain ATCC 27815 / 27 / NCTC 11736).